We begin with the raw amino-acid sequence, 111 residues long: Large ribosomal subunit protein uL22 (111 aa).

This sequence belongs to the universal ribosomal protein uL22 family. Part of the 50S ribosomal subunit.

Functionally, this protein binds specifically to 23S rRNA; its binding is stimulated by other ribosomal proteins, e.g. L4, L17, and L20. It is important during the early stages of 50S assembly. It makes multiple contacts with different domains of the 23S rRNA in the assembled 50S subunit and ribosome. Its function is as follows. The globular domain of the protein is located near the polypeptide exit tunnel on the outside of the subunit, while an extended beta-hairpin is found that lines the wall of the exit tunnel in the center of the 70S ribosome. The sequence is that of Large ribosomal subunit protein uL22 from Clostridium kluyveri (strain NBRC 12016).